The chain runs to 158 residues: SsrA-binding protein (158 aa).

A disordered region spans residues 132–158 (KKTHDKRETEKKRDWNREKARLMRDKG). Basic and acidic residues predominate over residues 136 to 158 (DKRETEKKRDWNREKARLMRDKG).

This sequence belongs to the SmpB family.

It is found in the cytoplasm. In terms of biological role, required for rescue of stalled ribosomes mediated by trans-translation. Binds to transfer-messenger RNA (tmRNA), required for stable association of tmRNA with ribosomes. tmRNA and SmpB together mimic tRNA shape, replacing the anticodon stem-loop with SmpB. tmRNA is encoded by the ssrA gene; the 2 termini fold to resemble tRNA(Ala) and it encodes a 'tag peptide', a short internal open reading frame. During trans-translation Ala-aminoacylated tmRNA acts like a tRNA, entering the A-site of stalled ribosomes, displacing the stalled mRNA. The ribosome then switches to translate the ORF on the tmRNA; the nascent peptide is terminated with the 'tag peptide' encoded by the tmRNA and targeted for degradation. The ribosome is freed to recommence translation, which seems to be the essential function of trans-translation. This Brucella anthropi (strain ATCC 49188 / DSM 6882 / CCUG 24695 / JCM 21032 / LMG 3331 / NBRC 15819 / NCTC 12168 / Alc 37) (Ochrobactrum anthropi) protein is SsrA-binding protein.